The sequence spans 362 residues: Very-long-chain (3R)-3-hydroxyacyl-CoA dehydratase 3 (362 aa).

M1 carries the post-translational modification N-acetylmethionine. Topologically, residues 1 to 149 (MENQVLTPHV…ETLTNLRKGY (149 aa)) are cytoplasmic. The region spanning 5–94 (VLTPHVYWAQ…KVSQWWERLT (90 aa)) is the CS domain. The residue at position 7 (T7) is a Phosphothreonine. The stretch at 111–136 (LDESDAEMELRAKEEERLNKLRLESE) forms a coiled coil. Phosphoserine occurs at positions 114 and 135. The chain crosses the membrane as a helical span at residues 150-170 (LFMYNLVQFLGFSWIFVNLTV). Residues 171–185 (RFCILGKESFYDTFH) are Lumenal-facing. Residues 186–207 (TVADMMYFCQMLAVVETINAAI) traverse the membrane as a helical segment. At 208 to 217 (GVTTSPVLPS) the chain is on the cytoplasmic side. Residues 218 to 235 (LIQLLGRNFILFIIFGTM) form a helical membrane-spanning segment. Topologically, residues 236–241 (EEMQNK) are lumenal. The chain crosses the membrane as a helical span at residues 242–256 (AVVFFVFYLWSAIEI). The Cytoplasmic portion of the chain corresponds to 257-279 (FRYSFYMLTCIDMDWKVLTWLRY). A helical membrane pass occupies residues 280–298 (TLWIPLYPLGCLAEAVSVI). Active-site residues include Y286 and E293. The Lumenal portion of the chain corresponds to 299–322 (QSIPIFNETGRFSFTLPYPVKIKV). The helical transmembrane segment at 323–343 (RFSFFLQIYLIMIFLGLYINF) threads the bilayer. Residues 344 to 362 (RHLYKQRRRRYGQKKKKIH) lie on the Cytoplasmic side of the membrane.

This sequence belongs to the very long-chain fatty acids dehydratase HACD family. As to quaternary structure, may interact with enzymes of the ELO family (including ELOVL1); with those enzymes that mediate condensation, the first of the four steps of the reaction cycle responsible for fatty acids elongation, may be part of a larger fatty acids elongase complex. Interacts with RAC1. Associates with internalized insulin receptor/INSR complexes on Golgi/endosomal membranes; HACD3/PTPLAD1 together with ATIC and PRKAA2/AMPK2 is proposed to be part of a signaling network regulating INSR autophosphorylation and endocytosis. As to expression, highly expressed in testis, kidney, brain, liver and weakly in skeletal muscle, spleen and heart. No expression detected in leukocytes.

Its subcellular location is the endoplasmic reticulum membrane. The enzyme catalyses a very-long-chain (3R)-3-hydroxyacyl-CoA = a very-long-chain (2E)-enoyl-CoA + H2O. It catalyses the reaction (3R)-hydroxyhexadecanoyl-CoA = (2E)-hexadecenoyl-CoA + H2O. The protein operates within lipid metabolism; fatty acid biosynthesis. Functionally, catalyzes the third of the four reactions of the long-chain fatty acids elongation cycle. This endoplasmic reticulum-bound enzymatic process, allows the addition of two carbons to the chain of long- and very long-chain fatty acids/VLCFAs per cycle. This enzyme catalyzes the dehydration of the 3-hydroxyacyl-CoA intermediate into trans-2,3-enoyl-CoA, within each cycle of fatty acid elongation. Thereby, it participates in the production of VLCFAs of different chain lengths that are involved in multiple biological processes as precursors of membrane lipids and lipid mediators. May be involved in Rac1-signaling pathways leading to the modulation of gene expression. Promotes insulin receptor/INSR autophosphorylation and is involved in INSR internalization. The protein is Very-long-chain (3R)-3-hydroxyacyl-CoA dehydratase 3 of Homo sapiens (Human).